The primary structure comprises 237 residues: Purine nucleoside phosphorylase DeoD-type (237 aa).

Histidine 4 contacts a purine D-ribonucleoside. Phosphate contacts are provided by residues glycine 20, arginine 24, arginine 43, and arginine 87 to threonine 90. Residues glutamate 180–glutamate 182 and serine 204–aspartate 205 each bind a purine D-ribonucleoside. Residue aspartate 205 is the Proton donor of the active site.

It belongs to the PNP/UDP phosphorylase family. In terms of assembly, homohexamer; trimer of homodimers.

It carries out the reaction a purine D-ribonucleoside + phosphate = a purine nucleobase + alpha-D-ribose 1-phosphate. The catalysed reaction is a purine 2'-deoxy-D-ribonucleoside + phosphate = a purine nucleobase + 2-deoxy-alpha-D-ribose 1-phosphate. In terms of biological role, catalyzes the reversible phosphorolytic breakdown of the N-glycosidic bond in the beta-(deoxy)ribonucleoside molecules, with the formation of the corresponding free purine bases and pentose-1-phosphate. The polypeptide is Purine nucleoside phosphorylase DeoD-type (Streptococcus suis (strain 98HAH33)).